A 285-amino-acid polypeptide reads, in one-letter code: HTH-type transcriptional regulator MurR (285 aa).

The HTH rpiR-type domain occupies 1 to 77 (MLYLTKIRNA…MALIGEYSAS (77 aa)). The segment at residues 37–56 (SRKMAKQLGISQSSIVKFAQ) is a DNA-binding region (H-T-H motif). The SIS domain maps to 128–268 (IIEVISKAPF…FVGLVQLNDV (141 aa)).

As to quaternary structure, homotetramer.

It participates in amino-sugar metabolism; N-acetylmuramate degradation [regulation]. In terms of biological role, represses the expression of the murPQ operon involved in the uptake and degradation of N-acetylmuramic acid (MurNAc). Binds to two adjacent inverted repeats within the operator region. MurNAc 6-phosphate, the substrate of MurQ, is the specific inducer that weakens binding of MurR to the operator. This chain is HTH-type transcriptional regulator MurR, found in Escherichia coli O9:H4 (strain HS).